Here is a 446-residue protein sequence, read N- to C-terminus: SPARC-related modular calcium-binding protein 2 (446 aa).

Residues 1–21 form the signal peptide; that stretch reads MLLPQLCWLPLLAGLLPPVPA. The Kazal-like domain occupies 34–86; it reads QDKDKDCSLDCAGSPQKPLCASDGRTFLSRCEFQRAKCKDPQLEIAYRGNCKD. Intrachain disulfides connect Cys40–Cys71, Cys44–Cys64, Cys53–Cys84, Cys90–Cys113, Cys124–Cys131, and Cys133–Cys153. Residues 87 to 153 form the Thyroglobulin type-1 1 domain; that stretch reads VSRCVAERKY…TAVAHKTPRC (67 aa). The segment at 147–228 is disordered; the sequence is AHKTPRCPGS…EHQSALEEAK (82 aa). Positions 161–172 are enriched in basic and acidic residues; sequence LPQREGTGKTDD. Asn206 carries N-linked (GlcNAc...) asparagine glycosylation. Over residues 206-216 the composition is skewed to polar residues; sequence NKTNKNSVSSC. The region spanning 213–281 is the Thyroglobulin type-1 2 domain; it reads VSSCDQEHQS…TSTRYEQPKC (69 aa). Cystine bridges form between Cys216–Cys240, Cys251–Cys258, and Cys260–Cys281. The span at 217–228 shows a compositional bias: basic and acidic residues; sequence DQEHQSALEEAK. 2 consecutive EF-hand domains span residues 347-382 and 384-419; these read LEER…LRKK and KPKK…AKED. The Ca(2+) site is built by Asp360, Asn362, Ser364, Asp366, Glu371, Asp397, Asn399, Asp401, Ser403, and Glu408. Asn362 carries an N-linked (GlcNAc...) asparagine glycan. The interval 416–446 is disordered; sequence AKEDGKADTKKRHTPRGHAESTSNRQPRKQG.

Binds various proteins from the extracellular matrix.

Its subcellular location is the secreted. It is found in the extracellular space. The protein resides in the extracellular matrix. It localises to the basement membrane. Functionally, promotes matrix assembly and cell adhesiveness. Can stimulate endothelial cell proliferation, migration, as well as angiogenesis. The chain is SPARC-related modular calcium-binding protein 2 (SMOC2) from Homo sapiens (Human).